The chain runs to 86 residues: Translation initiation factor IF-1 (86 aa).

The S1-like domain occupies 1–72 (MPKDDVIKME…TKGRIVYRKK (72 aa)).

The protein belongs to the IF-1 family. In terms of assembly, component of the 30S ribosomal translation pre-initiation complex which assembles on the 30S ribosome in the order IF-2 and IF-3, IF-1 and N-formylmethionyl-tRNA(fMet); mRNA recruitment can occur at any time during PIC assembly.

It localises to the cytoplasm. Its function is as follows. One of the essential components for the initiation of protein synthesis. Stabilizes the binding of IF-2 and IF-3 on the 30S subunit to which N-formylmethionyl-tRNA(fMet) subsequently binds. Helps modulate mRNA selection, yielding the 30S pre-initiation complex (PIC). Upon addition of the 50S ribosomal subunit IF-1, IF-2 and IF-3 are released leaving the mature 70S translation initiation complex. This Pseudothermotoga lettingae (strain ATCC BAA-301 / DSM 14385 / NBRC 107922 / TMO) (Thermotoga lettingae) protein is Translation initiation factor IF-1.